Here is a 422-residue protein sequence, read N- to C-terminus: ATP phosphoribosyltransferase regulatory subunit (422 aa).

This sequence belongs to the class-II aminoacyl-tRNA synthetase family. HisZ subfamily. As to quaternary structure, heteromultimer composed of HisG and HisZ subunits.

It is found in the cytoplasm. The protein operates within amino-acid biosynthesis; L-histidine biosynthesis; L-histidine from 5-phospho-alpha-D-ribose 1-diphosphate: step 1/9. Required for the first step of histidine biosynthesis. May allow the feedback regulation of ATP phosphoribosyltransferase activity by histidine. The protein is ATP phosphoribosyltransferase regulatory subunit of Clostridium botulinum (strain 657 / Type Ba4).